The following is a 96-amino-acid chain: Muconolactone Delta-isomerase (96 aa).

It belongs to the muconolactone Delta-isomerase family. In terms of assembly, homodecamer.

It carries out the reaction (S)-muconolactone = (4,5-dihydro-5-oxofuran-2-yl)-acetate. It participates in aromatic compound metabolism; beta-ketoadipate pathway; 5-oxo-4,5-dihydro-2-furylacetate from catechol: step 3/3. The protein is Muconolactone Delta-isomerase (catC) of Pseudomonas putida (Arthrobacter siderocapsulatus).